A 1562-amino-acid polypeptide reads, in one-letter code: E3 ubiquitin-protein ligase listerin (1562 aa).

14 HEAT repeats span residues 41 to 78, 127 to 164, 175 to 217, 262 to 301, 304 to 348, 495 to 532, 555 to 592, 813 to 850, 908 to 945, 997 to 1037, 1047 to 1085, 1188 to 1226, 1263 to 1298, and 1299 to 1339; these read SLYS…DFNQ, KFLK…KDPA, EQLL…SAVL, ETVL…ITSK, LKVC…VSRT, SAIS…FLDS, STYQ…VALS, IRYA…DYNC, YYSR…KTVR, FKSL…WLDS, TVRL…DSLS, INQS…SDVD, NSFI…KEAG, and LINR…NFSP. The RING-type zinc-finger motif lies at 1508 to 1555; sequence CAICYSILHAVDRKLPSKTCPTCKNKFHGACLYKWFRSSGNNTCPLCR.

Belongs to the LTN1 family. Component of the ribosome quality control complex (RQC), composed of the E3 ubiquitin ligase RKR1/LTN1, RQC1 and RQC2, as well as CDC48 and its ubiquitin-binding cofactors associated with the 60S ribosomal subunits.

It localises to the nucleus. The protein localises to the cytoplasm. Its subcellular location is the cytosol. It catalyses the reaction S-ubiquitinyl-[E2 ubiquitin-conjugating enzyme]-L-cysteine + [acceptor protein]-L-lysine = [E2 ubiquitin-conjugating enzyme]-L-cysteine + N(6)-ubiquitinyl-[acceptor protein]-L-lysine.. It participates in protein modification; protein ubiquitination. E3 ubiquitin-protein ligase component of the ribosome quality control complex (RQC), a ribosome-associated complex that mediates ubiquitination and extraction of incompletely synthesized nascent chains for proteasomal degradation. Mediates ubiquitination of proteins derived from mRNAs lacking stop codons (non-stop proteins) and other translation arrest products induced by poly-lysine sequences and tandem rare codons. Ubiquitination leads to CDC48 recruitment for extraction and degradation of the incomplete translation product. May indirectly play a role in chromatin function and transcription. In Saccharomyces cerevisiae (strain ATCC 204508 / S288c) (Baker's yeast), this protein is E3 ubiquitin-protein ligase listerin.